The sequence spans 116 residues: Holo-[acyl-carrier-protein] synthase (116 aa).

D8 and E59 together coordinate Mg(2+).

It belongs to the P-Pant transferase superfamily. AcpS family. Mg(2+) serves as cofactor.

The protein resides in the cytoplasm. The enzyme catalyses apo-[ACP] + CoA = holo-[ACP] + adenosine 3',5'-bisphosphate + H(+). Transfers the 4'-phosphopantetheine moiety from coenzyme A to a Ser of acyl-carrier-protein. The protein is Holo-[acyl-carrier-protein] synthase of Staphylococcus saprophyticus subsp. saprophyticus (strain ATCC 15305 / DSM 20229 / NCIMB 8711 / NCTC 7292 / S-41).